Consider the following 654-residue polypeptide: Probable replication restart protein PriA (654 aa).

Residues C367, C370, C376, C379, C395, C398, C407, and C410 each contribute to the Zn(2+) site.

The protein belongs to the helicase family. PriA subfamily. As to quaternary structure, component of the replication restart primosome. Requires Zn(2+) as cofactor.

In terms of biological role, initiates the restart of stalled replication forks, which reloads the replicative helicase on sites other than the origin of replication. Recognizes and binds to abandoned replication forks and remodels them to uncover a helicase loading site. Promotes assembly of the primosome at these replication forks. This chain is Probable replication restart protein PriA, found in Mycobacterium tuberculosis (strain CDC 1551 / Oshkosh).